The following is a 156-amino-acid chain: Large ribosomal subunit protein eL24 (156 aa).

Positions 110 to 123 (RAAKEKQKQKELEK) are enriched in basic and acidic residues. Residues 110–156 (RAAKEKQKQKELEKKAKKVEKKKPTLAPKQKAAKITQKPAPRVGGKR) are disordered.

It belongs to the eukaryotic ribosomal protein eL24 family.

This chain is Large ribosomal subunit protein eL24 (RPL24), found in Schistosoma japonicum (Blood fluke).